Here is a 232-residue protein sequence, read N- to C-terminus: Thiamine import ATP-binding protein ThiQ (232 aa).

In terms of domain architecture, ABC transporter spans 2–230 (LKLTDITWLY…KASASALLGI (229 aa)). 32–39 (GPSGAGKS) is a binding site for ATP.

The protein belongs to the ABC transporter superfamily. Thiamine importer (TC 3.A.1.19.1) family. As to quaternary structure, the complex is composed of two ATP-binding proteins (ThiQ), two transmembrane proteins (ThiP) and a solute-binding protein (ThiB).

The protein localises to the cell inner membrane. It carries out the reaction thiamine(out) + ATP + H2O = thiamine(in) + ADP + phosphate + H(+). Part of the ABC transporter complex ThiBPQ involved in thiamine import. Responsible for energy coupling to the transport system. In Escherichia coli (strain UTI89 / UPEC), this protein is Thiamine import ATP-binding protein ThiQ.